A 438-amino-acid polypeptide reads, in one-letter code: Dol-P-Man:Man(5)GlcNAc(2)-PP-Dol alpha-1,3-mannosyltransferase (438 aa).

At Ser-13 the chain carries Phosphoserine. A run of 11 helical transmembrane segments spans residues 41-61 (YTLLVAACLCLAEVGITFWVI), 95-115 (TGPLVYPAGFVYIFMGLYYAT), 123-143 (MAQNIFAVLYLATLLLVFLIY), 149-169 (VPPFVFFFMCCASYRVHSIFV), 172-192 (LFNDPVAMVLLFLSINLLLAQ), 203-223 (LAVSVKMNVLLFAPGLLFLLL), 231-251 (ALPKLGICAGLQVVLGLPFLL), 289-309 (FHLALLTAHLTLLLLFALCRW), 332-352 (PLTPNQIVSTLFTSNFIGICF), 356-376 (LHYQFYVWYFHTLPYLLWAMP), and 407-427 (AALHICHAVILLQLWLGPQPF).

Belongs to the glycosyltransferase ALG3 family.

The protein resides in the endoplasmic reticulum membrane. The enzyme catalyses an alpha-D-Man-(1-&gt;2)-alpha-D-Man-(1-&gt;2)-alpha-D-Man-(1-&gt;3)-[alpha-D-Man-(1-&gt;6)]-beta-D-Man-(1-&gt;4)-beta-D-GlcNAc-(1-&gt;4)-alpha-D-GlcNAc-diphospho-di-trans,poly-cis-dolichol + a di-trans,poly-cis-dolichyl beta-D-mannosyl phosphate = an alpha-D-Man-(1-&gt;2)-alpha-D-Man-(1-&gt;2)-alpha-D-Man-(1-&gt;3)-[alpha-D-Man-(1-&gt;3)-alpha-D-Man-(1-&gt;6)]-beta-D-Man-(1-&gt;4)-beta-D-GlcNAc-(1-&gt;4)-alpha-D-GlcNAc-diphospho-di-trans,poly-cis-dolichol + a di-trans,poly-cis-dolichyl phosphate + H(+). It functions in the pathway protein modification; protein glycosylation. Dol-P-Man:Man(5)GlcNAc(2)-PP-Dol alpha-1,3-mannosyltransferase that operates in the biosynthetic pathway of dolichol-linked oligosaccharides, the glycan precursors employed in protein asparagine (N)-glycosylation. The assembly of dolichol-linked oligosaccharides begins on the cytosolic side of the endoplasmic reticulum membrane and finishes in its lumen. The sequential addition of sugars to dolichol pyrophosphate produces dolichol-linked oligosaccharides containing fourteen sugars, including two GlcNAcs, nine mannoses and three glucoses. Once assembled, the oligosaccharide is transferred from the lipid to nascent proteins by oligosaccharyltransferases. In the lumen of the endoplasmic reticulum, adds the first dolichyl beta-D-mannosyl phosphate derived mannose in an alpha-1,3 linkage to Man(5)GlcNAc(2)-PP-dolichol to produce Man(6)GlcNAc(2)-PP-dolichol. Man(6)GlcNAc(2)-PP-dolichol is a substrate for ALG9, the following enzyme in the biosynthetic pathway. In Homo sapiens (Human), this protein is Dol-P-Man:Man(5)GlcNAc(2)-PP-Dol alpha-1,3-mannosyltransferase.